Here is a 195-residue protein sequence, read N- to C-terminus: Exosome complex component CSL4 (195 aa).

S21 carries the post-translational modification Phosphoserine. Residues 66–147 (DVGAVVTCKV…AQSNYLLTTA (82 aa)) form the S1 motif domain.

The protein belongs to the CSL4 family. In terms of assembly, component of the RNA exosome core complex (Exo-9), composed of EXOSC1, EXOSC2, EXOSC3, EXOSC4, EXOSC5, EXOSC6, EXOSC7, EXOSC8 and EXOSC9; within the complex interacts with EXOSC6. The catalytically inactive RNA exosome core complex (Exo-9) associates with the catalytic subunit EXOSC10/RRP6. Exo-9 may associate with DIS3 to form the nucleolar exosome complex, or DIS3L to form the cytoplasmic exosome complex. Exo-9 is formed by a hexameric base ring consisting of the heterodimers EXOSC4-EXOSC9, EXOSC5-EXOSC8 and EXOSC6-EXOSC7, and a cap ring consisting of EXOSC1, EXOSC2 and EXOSC3. The RNA exosome complex associates with cofactors C1D/RRP47, MPHOSPH6/MPP6 and MTREX/MTR4. Interacts with DDX60.

The protein localises to the nucleus. Its subcellular location is the nucleolus. The protein resides in the cytoplasm. Its function is as follows. Non-catalytic component of the RNA exosome complex which has 3'-&gt;5' exoribonuclease activity and participates in a multitude of cellular RNA processing and degradation events. In the nucleus, the RNA exosome complex is involved in proper maturation of stable RNA species such as rRNA, snRNA and snoRNA, in the elimination of RNA processing by-products and non-coding 'pervasive' transcripts, such as antisense RNA species and promoter-upstream transcripts (PROMPTs), and of mRNAs with processing defects, thereby limiting or excluding their export to the cytoplasm. The RNA exosome may be involved in Ig class switch recombination (CSR) and/or Ig variable region somatic hypermutation (SHM) by targeting AICDA deamination activity to transcribed dsDNA substrates. In the cytoplasm, the RNA exosome complex is involved in general mRNA turnover and specifically degrades inherently unstable mRNAs containing AU-rich elements (AREs) within their 3' untranslated regions, and in RNA surveillance pathways, preventing translation of aberrant mRNAs. It seems to be involved in degradation of histone mRNA. The catalytic inactive RNA exosome core complex of 9 subunits (Exo-9) is proposed to play a pivotal role in the binding and presentation of RNA for ribonucleolysis, and to serve as a scaffold for the association with catalytic subunits and accessory proteins or complexes. EXOSC1 as peripheral part of the Exo-9 complex stabilizes the hexameric ring of RNase PH-domain subunits through contacts with EXOSC6 and EXOSC8. The sequence is that of Exosome complex component CSL4 (Exosc1) from Mus musculus (Mouse).